Here is a 268-residue protein sequence, read N- to C-terminus: Dioscorin DB3S (268 aa).

The 235-residue stretch at 25-259 (DEFSYIEGNP…TNFRSVFYFE (235 aa)) folds into the Alpha-carbonic anhydrase domain. A disulfide bridge connects residues Cys-50 and Cys-209. His-91 acts as the Proton acceptor in catalysis. L-ascorbate contacts are provided by residues Asp-92, 117–119 (HFH), Gln-136, and 205–206 (TA).

It belongs to the alpha-class carbonic anhydrase family. In terms of assembly, monomer. Homodimer. In terms of processing, not glycosylated. Expressed in tuber (at protein level).

The enzyme catalyses hydrogencarbonate + H(+) = CO2 + H2O. It catalyses the reaction 2 monodehydro-L-ascorbate radical + NADH + H(+) = 2 L-ascorbate + NAD(+). Storage protein of tuber. Involved in protection against oxidative stress. Has carbonate dehydratase and weak trypsin inhibitor activity detected by measuring the dehydration of sodium bicarbonate and the inhibition of trypsin-catalyzed hydrolysis of N-benzoyl-L-arginine-4-nitro anilide, respectively. Contrarily, no carbonate dehydratase or trypsin inhibitor activity detected by measuring the hydrolysis of 4-nitrophenyl acetate or the inhibition of bovine trypsin-catalyzed hydrolysis of N-benzoyl-L-arginine ethyl ester, respectively. Has dehydroascorbate (DHA) reductase and monodehydroascorbate (MDA) reductase activities. Catalyzes the reactions of carbonate dehydratase and DHA reductase independently of zinc and glutathione (GSH). The coupled reaction is capable of recycling a plant antioxidant ascorbate using ubiquitous compounds H(2)O and CO(2). Exhibits antioxidant activity. Able to scavenge 1,1-diphenyl-2-picrylhydrazyl (DPPH) radical and hydroxyl radicals. Exhibits immunomodulatory activity. Activates Toll-like receptor 4 signaling pathways by up-regulating the gene expression of pro-inflammatory cytokines, such as tumor necrosis factor alpha, interleukin-1 beta and interleukin-6, and chemokines RANTES and MCP-1, in mouse RAW 264.7 macrophages. Stimulates the phagocytosis of E.coli by the LPS-treated mouse macrophages. This Dioscorea polystachya (Chinese yam) protein is Dioscorin DB3S.